Consider the following 2093-residue polypeptide: Nuclear-pore anchor (2093 aa).

Coiled-coil stretches lie at residues leucine 57–leucine 362, methionine 439–glutamine 529, aspartate 570–glutamate 627, and glutamine 688–lysine 1172. A disordered region spans residues asparagine 1175–aspartate 1198. The segment covering arginine 1182–threonine 1191 has biased composition (low complexity). 2 coiled-coil regions span residues leucine 1208–alanine 1252 and glutamate 1293–alanine 1585. 3 disordered regions span residues tyrosine 1453 to glutamate 1489, lysine 1525 to lysine 1555, and serine 1627 to proline 2093. Basic and acidic residues predominate over residues glutamine 1470–threonine 1483. Polar residues predominate over residues serine 1652–leucine 1674. Composition is skewed to basic and acidic residues over residues lysine 1710–valine 1719 and aspartate 1729–glutamate 1740. Positions serine 1764–glutamate 1779 are enriched in polar residues. The segment covering lysine 1789–alanine 1808 has biased composition (basic and acidic residues). Residues threonine 1818–glutamate 1849 are a coiled coil. 2 stretches are compositionally biased toward acidic residues: residues glycine 1821 to asparagine 1830 and tyrosine 1838 to threonine 1903. The span at threonine 1921 to arginine 1931 shows a compositional bias: polar residues. Acidic residues predominate over residues alanine 1935 to alanine 1963. A compositionally biased stretch (low complexity) spans threonine 1984–serine 2009. At serine 2022 the chain carries Phosphoserine.

As to quaternary structure, part of the nuclear pore complex (NPC). The NPC has an eight-fold symmetrical structure comprising a central transport channel and two rings, the cytoplasmic and nuclear rings, to which eight filaments are attached. The cytoplasmic filaments have loose ends, while the nuclear filaments are joined in a distal ring, forming a nuclear basket. NPCs are highly dynamic in configuration and composition, and can be devided in 3 subcomplexes, the NUP62 subcomplex, the NUP107-160 subcomplex and the NUP93 subcomplex, containing approximately 30 different nucleoporin proteins. Interacts with MAD1 and (via N-terminus) with ESD4. Ubiquitous. Highest expression in the shoot apical region.

It localises to the nucleus envelope. It is found in the nucleus membrane. Its subcellular location is the nucleus. The protein localises to the nuclear pore complex. In terms of biological role, component of the nuclear pore complex. Acts as a docking site for activities required for desumoylation and mRNA export. Required for the proper expression or localization of a subset of miRNAs. Plays a role in meristematic cell division by interacting with spindle assembly checkpoint proteins. In Arabidopsis thaliana (Mouse-ear cress), this protein is Nuclear-pore anchor.